The sequence spans 372 residues: Tryptophan--tRNA ligase (372 aa).

A 'HIGH' region motif is present at residues 79 to 87 (PSGKFHFGH). Residues 247–268 (KLQPGLDGRKMSSSRPDSTIFL) are disordered. The 'KMSKS' region signature appears at 256–260 (KMSSS). Polar residues predominate over residues 257 to 267 (MSSSRPDSTIF).

This sequence belongs to the class-I aminoacyl-tRNA synthetase family.

It localises to the cytoplasm. It carries out the reaction tRNA(Trp) + L-tryptophan + ATP = L-tryptophyl-tRNA(Trp) + AMP + diphosphate + H(+). The sequence is that of Tryptophan--tRNA ligase from Aeropyrum pernix (strain ATCC 700893 / DSM 11879 / JCM 9820 / NBRC 100138 / K1).